The following is a 310-amino-acid chain: Putative HTH-type transcriptional regulatory protein YN1551_1579 (310 aa).

The HTH cro/C1-type domain maps to 125–180 (LKHKREEMGYSIGDVAKFLGVSRKAIYDYEKGDSDVSLEVAEKLIDLFGDDIIGDV). Residues 136-155 (IGDVAKFLGVSRKAIYDYEK) constitute a DNA-binding region (H-T-H motif).

The protein is Putative HTH-type transcriptional regulatory protein YN1551_1579 of Saccharolobus islandicus (strain Y.N.15.51 / Yellowstone #2) (Sulfolobus islandicus).